The chain runs to 637 residues: Biosynthetic arginine decarboxylase (637 aa).

The residue at position 101 (lysine 101) is an N6-(pyridoxal phosphate)lysine. 286–296 contributes to the substrate binding site; that stretch reads FDVGGGLAVDY.

This sequence belongs to the Orn/Lys/Arg decarboxylase class-II family. SpeA subfamily. Mg(2+) serves as cofactor. Requires pyridoxal 5'-phosphate as cofactor.

It carries out the reaction L-arginine + H(+) = agmatine + CO2. The protein operates within amine and polyamine biosynthesis; agmatine biosynthesis; agmatine from L-arginine: step 1/1. Functionally, catalyzes the biosynthesis of agmatine from arginine. In Shewanella loihica (strain ATCC BAA-1088 / PV-4), this protein is Biosynthetic arginine decarboxylase.